We begin with the raw amino-acid sequence, 259 residues long: Global transcriptional regulator CodY (259 aa).

The GAF domain stretch occupies residues 1–155 (MALLQKTRII…GATVVGMEIL (155 aa)). Residues 203–222 (ASKIADRVGITRSVIVNALR) constitute a DNA-binding region (H-T-H motif). The residue at position 215 (serine 215) is a Phosphoserine.

The protein belongs to the CodY family.

It localises to the cytoplasm. In terms of biological role, DNA-binding global transcriptional regulator which is involved in the adaptive response to starvation and acts by directly or indirectly controlling the expression of numerous genes in response to nutrient availability. During rapid exponential growth, CodY is highly active and represses genes whose products allow adaptation to nutrient depletion. The polypeptide is Global transcriptional regulator CodY (Bacillus pumilus (strain SAFR-032)).